Consider the following 174-residue polypeptide: Chaperonin-like RBCX protein 1, chloroplastic (174 aa).

The transit peptide at 1 to 45 directs the protein to the chloroplast; the sequence is MESSSSLLHHSYLSYLNPKFGKRPLVSYPLMQSSRKCKQTRICSN.

Belongs to the RbcX family. As to quaternary structure, homodimer. Interacts with rbcL, atpB and THI1.

It localises to the plastid. Its subcellular location is the chloroplast. In terms of biological role, chaperone involved in RuBisCO assembly process. The sequence is that of Chaperonin-like RBCX protein 1, chloroplastic from Arabidopsis thaliana (Mouse-ear cress).